A 215-amino-acid chain; its full sequence is Adenylate kinase (215 aa).

ATP is bound at residue 14-19 (GVGKGT). Residues 34–63 (STGDIFRSVMQEQGALSQTLAHYMNQGLYV) form an NMP region. AMP-binding positions include T35, R40, 61–63 (LYV), 91–94 (GYPR), and Q98. The interval 128–165 (NRLVCPSCGSVYNKQSKPPLKANQCDRCHATLQARNDD) is LID. An ATP-binding site is contributed by R129. Zn(2+) is bound by residues C132 and C135. 138-139 (VY) provides a ligand contact to ATP. Residues C152 and C155 each coordinate Zn(2+). 2 residues coordinate AMP: R162 and R173. Residue Q211 coordinates ATP.

It belongs to the adenylate kinase family. As to quaternary structure, monomer.

The protein localises to the cytoplasm. The enzyme catalyses AMP + ATP = 2 ADP. Its pathway is purine metabolism; AMP biosynthesis via salvage pathway; AMP from ADP: step 1/1. Catalyzes the reversible transfer of the terminal phosphate group between ATP and AMP. Plays an important role in cellular energy homeostasis and in adenine nucleotide metabolism. This chain is Adenylate kinase, found in Mycoplasma pneumoniae (strain ATCC 29342 / M129 / Subtype 1) (Mycoplasmoides pneumoniae).